Consider the following 375-residue polypeptide: Glucokinase 1 (375 aa).

25 to 30 lines the ATP pocket; sequence CDVGGS.

The protein belongs to the bacterial glucokinase family. As to quaternary structure, monomer. The N-terminus is blocked.

The enzyme catalyses D-glucose + ATP = D-glucose 6-phosphate + ADP + H(+). In Trichomonas vaginalis, this protein is Glucokinase 1 (GK1).